We begin with the raw amino-acid sequence, 294 residues long: tRNA dimethylallyltransferase (294 aa).

11 to 18 (GPTAVGKT) contributes to the ATP binding site. Residue 13–18 (TAVGKT) participates in substrate binding. The interval 36–39 (DSQQ) is interaction with substrate tRNA.

Belongs to the IPP transferase family. Monomer. It depends on Mg(2+) as a cofactor.

It catalyses the reaction adenosine(37) in tRNA + dimethylallyl diphosphate = N(6)-dimethylallyladenosine(37) in tRNA + diphosphate. In terms of biological role, catalyzes the transfer of a dimethylallyl group onto the adenine at position 37 in tRNAs that read codons beginning with uridine, leading to the formation of N6-(dimethylallyl)adenosine (i(6)A). The protein is tRNA dimethylallyltransferase of Lactococcus lactis subsp. cremoris (strain MG1363).